The following is a 556-amino-acid chain: Formate--tetrahydrofolate ligase 2 (556 aa).

65–72 serves as a coordination point for ATP; sequence TPAGEGKS.

It belongs to the formate--tetrahydrofolate ligase family.

The catalysed reaction is (6S)-5,6,7,8-tetrahydrofolate + formate + ATP = (6R)-10-formyltetrahydrofolate + ADP + phosphate. It functions in the pathway one-carbon metabolism; tetrahydrofolate interconversion. This Streptococcus sanguinis (strain SK36) protein is Formate--tetrahydrofolate ligase 2.